Here is an 896-residue protein sequence, read N- to C-terminus: Valine--tRNA ligase (896 aa).

Positions 48-58 match the 'HIGH' region motif; sequence PNVTGSLHMGH. The 'KMSKS' region motif lies at 543–547; it reads KMSKS. An ATP-binding site is contributed by Lys-546. Residues 830-896 are a coiled coil; sequence VIDLDAERTR…ARLGAALERL (67 aa).

It belongs to the class-I aminoacyl-tRNA synthetase family. ValS type 1 subfamily. As to quaternary structure, monomer.

Its subcellular location is the cytoplasm. It carries out the reaction tRNA(Val) + L-valine + ATP = L-valyl-tRNA(Val) + AMP + diphosphate. Functionally, catalyzes the attachment of valine to tRNA(Val). As ValRS can inadvertently accommodate and process structurally similar amino acids such as threonine, to avoid such errors, it has a 'posttransfer' editing activity that hydrolyzes mischarged Thr-tRNA(Val) in a tRNA-dependent manner. This Granulibacter bethesdensis (strain ATCC BAA-1260 / CGDNIH1) protein is Valine--tRNA ligase.